The primary structure comprises 274 residues: Serine/threonine-protein kinase 1 (274 aa).

Residues Ala17–Trp265 enclose the Protein kinase domain. Residues Leu23–Val31 and Lys46 contribute to the ATP site. Asp133 acts as the Proton acceptor in catalysis.

This sequence belongs to the protein kinase superfamily. Ser/Thr protein kinase family.

It catalyses the reaction L-seryl-[protein] + ATP = O-phospho-L-seryl-[protein] + ADP + H(+). It carries out the reaction L-threonyl-[protein] + ATP = O-phospho-L-threonyl-[protein] + ADP + H(+). In terms of biological role, in vitro, can phosphorylate histone H1. This is Serine/threonine-protein kinase 1 (PK1) from Lymantria dispar multicapsid nuclear polyhedrosis virus (LdMNPV).